A 284-amino-acid polypeptide reads, in one-letter code: Tropomyosin (284 aa).

Residues 1–47 (MDAIKKKMQAMKIEKDNAMDRADAAEEKARQQQERVEKLEEELRDTQ) form a disordered region. Residues 1 to 284 (MDAIKKKMQA…DQTFQELSGY (284 aa)) are a coiled coil. The span at 12-38 (KIEKDNAMDRADAAEEKARQQQERVEK) shows a compositional bias: basic and acidic residues.

The protein belongs to the tropomyosin family.

Its function is as follows. Tropomyosin, in association with the troponin complex, plays a central role in the calcium dependent regulation of muscle contraction. The sequence is that of Tropomyosin from Trichinella spiralis (Trichina worm).